Here is a 483-residue protein sequence, read N- to C-terminus: Pre-glycoprotein polyprotein GP complex (483 aa).

A lipid anchor (N-myristoyl glycine; by host) is attached at Gly2. The Extracellular segment spans residues 2–17 (GQFISFMQEIPIFLQE). The chain crosses the membrane as a helical span at residues 18–32 (ALNIALVAVSLICIV). Lys33 is a topological domain (cytoplasmic). Residues 34-53 (GLVNLYRCGLFQLMVFLVLA) traverse the membrane as a helical segment. Extracellular-facing segments span residues 54-58 (GRSCS) and 59-422 (EETF…TLVD). Cys57 serves as a coordination point for Zn(2+). 2 N-linked (GlcNAc...) asparagine; by host glycosylation sites follow: Asn83 and Asn95. Disulfide bonds link Cys92/Cys224, Cys134/Cys162, Cys205/Cys211, Cys269/Cys282, Cys291/Cys300, and Cys354/Cys375. N-linked (GlcNAc...) asparagine; by host glycosylation is found at Asn164 and Asn176. Residues Asn355, Asn363, Asn380, and Asn385 are each glycosylated (N-linked (GlcNAc...) asparagine; by host). A helical transmembrane segment spans residues 423-443 (ICFWSTVFFTSTLFLHLIGFP). At 444–483 (THEHIRGEGCPLPHRLNSMGGCRCGKYLPLKKPTIWHRRH) the chain is on the cytoplasmic side. Zn(2+)-binding residues include His445, His447, Cys453, His457, Cys465, Cys467, and His483.

The protein belongs to the arenaviridae GPC protein family. In terms of assembly, homotetramer; disulfide-linked. As to quaternary structure, homotetramer. GP2 homotetramers bind through ionic interactions with GP1 homotetramers to form the GP complex together with the stable signal peptide. The GP-C polyprotein interacts with the host protease MBTPS1/SKI-1 resulting in the polyprotein processing. In terms of processing, specific enzymatic cleavages in vivo yield mature proteins. GP-C polyprotein is cleaved in the endoplasmic reticulum by the host protease MBTPS1. Only cleaved glycoprotein is incorporated into virions. Post-translationally, the SSP remains stably associated with the GP complex following cleavage by signal peptidase and plays crucial roles in the trafficking of GP through the secretory pathway. Myristoylation is necessary for GP2-mediated fusion activity.

It localises to the virion membrane. It is found in the host endoplasmic reticulum membrane. The protein localises to the host Golgi apparatus membrane. Its subcellular location is the host cell membrane. Functionally, class I viral fusion protein that directs fusion of viral and host endosomal membranes, leading to delivery of the nucleocapsid into the cytoplasm. Membrane fusion is mediated by irreversible conformational changes induced upon acidification in the endosome. In terms of biological role, stable signal peptide (SSP): cleaved and functions as a signal peptide. In addition, it is also retained as the third component of the GP complex. The SSP is required for efficient glycoprotein expression, post-translational maturation cleavage of GP1 and GP2, glycoprotein transport to the cell surface plasma membrane, formation of infectious virus particles, and acid pH-dependent glycoprotein-mediated cell fusion. Interacts with the host receptor. This Tacaribe virus (strain V5) (TCRV) protein is Pre-glycoprotein polyprotein GP complex.